The chain runs to 165 residues: Ribosome maturation factor RimM (165 aa).

In terms of domain architecture, PRC barrel spans 90 to 161 (EDEYFIVDLV…LITIRPSGEW (72 aa)).

It belongs to the RimM family. In terms of assembly, binds ribosomal protein uS19.

The protein resides in the cytoplasm. In terms of biological role, an accessory protein needed during the final step in the assembly of 30S ribosomal subunit, possibly for assembly of the head region. Essential for efficient processing of 16S rRNA. May be needed both before and after RbfA during the maturation of 16S rRNA. It has affinity for free ribosomal 30S subunits but not for 70S ribosomes. The sequence is that of Ribosome maturation factor RimM from Clostridium perfringens (strain ATCC 13124 / DSM 756 / JCM 1290 / NCIMB 6125 / NCTC 8237 / Type A).